Here is a 691-residue protein sequence, read N- to C-terminus: DNA-directed RNA polymerase subunit beta' (691 aa).

Residues C76, C78, C94, and C97 each contribute to the Zn(2+) site. 3 residues coordinate Mg(2+): D496, D498, and D500.

The protein belongs to the RNA polymerase beta' chain family. RpoC1 subfamily. The cofactor is Mg(2+). It depends on Zn(2+) as a cofactor.

The protein localises to the plastid. The enzyme catalyses RNA(n) + a ribonucleoside 5'-triphosphate = RNA(n+1) + diphosphate. Its function is as follows. DNA-dependent RNA polymerase catalyzes the transcription of DNA into RNA using the four ribonucleoside triphosphates as substrates. This chain is DNA-directed RNA polymerase subunit beta', found in Cuscuta exaltata (Tall dodder).